Reading from the N-terminus, the 302-residue chain is Nitric oxide synthase-interacting protein (302 aa).

Serine 36 bears the Phosphoserine mark. The interval 55–75 (DPVVTPDGYLYEREAILEYIL) is U-box-like. The short motif at 78–101 (KKEIARQMKAYEKQRGARREEQKE) is the Nuclear localization signal element. Residues 126 to 156 (LNPFTPKAASAGNGPDDAQPGSSAGPAGKDK) are disordered.

This sequence belongs to the NOSIP family. In terms of assembly, interacts with NOS1 and NOS3. Interacts with PP2A holoenzyme, containing PPP2CA, PPP2CB, PPP2R1A and PPP2R2A subunits.

The protein resides in the cytoplasm. It is found in the nucleus. It carries out the reaction S-ubiquitinyl-[E2 ubiquitin-conjugating enzyme]-L-cysteine + [acceptor protein]-L-lysine = [E2 ubiquitin-conjugating enzyme]-L-cysteine + N(6)-ubiquitinyl-[acceptor protein]-L-lysine.. Functionally, E3 ubiquitin-protein ligase that is essential for proper development of the forebrain, the eye, and the face. Catalyzes monoubiquitination of serine/threonine-protein phosphatase 2A (PP2A) catalytic subunit PPP2CA/PPP2CB. Negatively regulates nitric oxide production by inducing NOS1 and NOS3 translocation to actin cytoskeleton and inhibiting their enzymatic activity. The polypeptide is Nitric oxide synthase-interacting protein (NOSIP) (Bos taurus (Bovine)).